The following is a 46-amino-acid chain: uncharacterized protein (46 aa).

Residues 1–46 (MNFGIKPDVSSGPRKGGPFKELSDFSKTSPTPQQPRSLSGKSVMLP) form a disordered region. Positions 25-40 (FSKTSPTPQQPRSLSG) are enriched in polar residues.

This is an uncharacterized protein from Dictyostelium discoideum (Social amoeba).